The sequence spans 85 residues: Large ribosomal subunit protein bL31B (85 aa).

Belongs to the bacterial ribosomal protein bL31 family. Type B subfamily. Part of the 50S ribosomal subunit.

The protein is Large ribosomal subunit protein bL31B of Staphylococcus saprophyticus subsp. saprophyticus (strain ATCC 15305 / DSM 20229 / NCIMB 8711 / NCTC 7292 / S-41).